Reading from the N-terminus, the 400-residue chain is Acetate kinase (400 aa).

Residue Asn10 coordinates Mg(2+). Residue Lys17 participates in ATP binding. Arg91 contributes to the substrate binding site. The active-site Proton donor/acceptor is the Asp150. Residues 210–214, 285–287, and 333–337 contribute to the ATP site; these read HLGSG, DCR, and GIGEN. Glu387 contacts Mg(2+).

The protein belongs to the acetokinase family. As to quaternary structure, homodimer. Requires Mg(2+) as cofactor. Mn(2+) serves as cofactor.

The protein resides in the cytoplasm. It catalyses the reaction acetate + ATP = acetyl phosphate + ADP. Its pathway is metabolic intermediate biosynthesis; acetyl-CoA biosynthesis; acetyl-CoA from acetate: step 1/2. In terms of biological role, catalyzes the formation of acetyl phosphate from acetate and ATP. Can also catalyze the reverse reaction. In Baumannia cicadellinicola subsp. Homalodisca coagulata, this protein is Acetate kinase.